The sequence spans 139 residues: Cystatin (139 aa).

The N-terminal stretch at 1–23 (MAGARGCVVLLAAALMLVGAVLG) is a signal peptide. Positions 76-80 (QLVSG) match the Secondary area of contact motif. 2 disulfide bridges follow: cysteine 94/cysteine 104 and cysteine 118/cysteine 138. Serine 103 carries the phosphoserine modification.

It belongs to the cystatin family.

It is found in the secreted. Its function is as follows. This protein binds tightly to and inhibits a variety of thiol proteases including ficin, papain, and cathepsins B, C, H, and L. Although isolated from egg white, it is also present in serum. This Gallus gallus (Chicken) protein is Cystatin.